A 199-amino-acid chain; its full sequence is MEISMDLIKKLREMTGAGILDCKKALEEANGDMEKAVEILRKKGAATAEKKAGRTTKEGIIVAYVHFNGRIGVLLEMNCETDFVARTDEFKELAYNLAKQVAAMKPLYVRREDVPAEVIEKEKEIYRAQIKDKPENIVEKIVEGKLEKFFEQACLYEQTYIFDDTKKVKDLINELIAKTGENIRVSRFTRYEIGEGYED.

The interval 81-84 (TDFV) is involved in Mg(2+) ion dislocation from EF-Tu.

It belongs to the EF-Ts family.

It localises to the cytoplasm. Its function is as follows. Associates with the EF-Tu.GDP complex and induces the exchange of GDP to GTP. It remains bound to the aminoacyl-tRNA.EF-Tu.GTP complex up to the GTP hydrolysis stage on the ribosome. The polypeptide is Elongation factor Ts (Thermotoga sp. (strain RQ2)).